We begin with the raw amino-acid sequence, 453 residues long: Bifunctional protein GlmU (453 aa).

The segment at 1–231 is pyrophosphorylase; sequence MERTCLAVIL…EIEMTGCNTR (231 aa). UDP-N-acetyl-alpha-D-glucosamine contacts are provided by residues 10 to 13, Lys-24, Gln-77, 82 to 83, 105 to 107, Gly-143, Glu-157, Asn-172, and Asn-229; these read LAAG, GT, and YGD. Asp-107 is a binding site for Mg(2+). Asn-229 lines the Mg(2+) pocket. Residues 232 to 252 are linker; sequence AELAVIERFWQERRRHQLMLS. The segment at 253 to 453 is N-acetyltransferase; it reads GVTMIAPETV…ATKAAKKAKG (201 aa). Residues Arg-318 and Lys-336 each coordinate UDP-N-acetyl-alpha-D-glucosamine. Residue His-348 is the Proton acceptor of the active site. Positions 351 and 362 each coordinate UDP-N-acetyl-alpha-D-glucosamine. Residues Ala-365, 371 to 372, Ser-390, Ser-408, and Arg-425 each bind acetyl-CoA; that span reads NY.

It in the N-terminal section; belongs to the N-acetylglucosamine-1-phosphate uridyltransferase family. In the C-terminal section; belongs to the transferase hexapeptide repeat family. Homotrimer. Mg(2+) is required as a cofactor.

Its subcellular location is the cytoplasm. The catalysed reaction is alpha-D-glucosamine 1-phosphate + acetyl-CoA = N-acetyl-alpha-D-glucosamine 1-phosphate + CoA + H(+). It catalyses the reaction N-acetyl-alpha-D-glucosamine 1-phosphate + UTP + H(+) = UDP-N-acetyl-alpha-D-glucosamine + diphosphate. The protein operates within nucleotide-sugar biosynthesis; UDP-N-acetyl-alpha-D-glucosamine biosynthesis; N-acetyl-alpha-D-glucosamine 1-phosphate from alpha-D-glucosamine 6-phosphate (route II): step 2/2. Its pathway is nucleotide-sugar biosynthesis; UDP-N-acetyl-alpha-D-glucosamine biosynthesis; UDP-N-acetyl-alpha-D-glucosamine from N-acetyl-alpha-D-glucosamine 1-phosphate: step 1/1. It participates in bacterial outer membrane biogenesis; LPS lipid A biosynthesis. Catalyzes the last two sequential reactions in the de novo biosynthetic pathway for UDP-N-acetylglucosamine (UDP-GlcNAc). The C-terminal domain catalyzes the transfer of acetyl group from acetyl coenzyme A to glucosamine-1-phosphate (GlcN-1-P) to produce N-acetylglucosamine-1-phosphate (GlcNAc-1-P), which is converted into UDP-GlcNAc by the transfer of uridine 5-monophosphate (from uridine 5-triphosphate), a reaction catalyzed by the N-terminal domain. The chain is Bifunctional protein GlmU from Rhizobium leguminosarum bv. trifolii (strain WSM2304).